A 79-amino-acid polypeptide reads, in one-letter code: Submaxillary gland androgen-regulated protein 3B (79 aa).

Residues 1 to 22 form the signal peptide; the sequence is MKSLTWILGLWALAACFTPGES. The disordered stretch occupies residues 19 to 79; it reads PGESQRGPRG…GIFPPPPPQP (61 aa). At Q23 the chain carries Pyrrolidone carboxylic acid. Positions 28–79 are enriched in pro residues; sequence GPYPPGPLAPPQPFGPGFVPPPPPPPYGPGRIPPPPPAPYGPGIFPPPPPQP.

This sequence belongs to the PROL1/PROL3 family. P-A and D1A are probably degradation products of P-B. In terms of tissue distribution, secreted into saliva by submaxillary gland. Not expressed in heart, brain, lung, liver, skeletal muscle, Kidney, pancreas or placenta.

It localises to the secreted. In Homo sapiens (Human), this protein is Submaxillary gland androgen-regulated protein 3B (SMR3B).